Consider the following 348-residue polypeptide: Mannonate dehydratase (348 aa).

The protein belongs to the mannonate dehydratase family. Fe(2+) serves as cofactor. Requires Mn(2+) as cofactor.

It carries out the reaction D-mannonate = 2-dehydro-3-deoxy-D-gluconate + H2O. The protein operates within carbohydrate metabolism; pentose and glucuronate interconversion. Catalyzes the dehydration of D-mannonate. This Staphylococcus haemolyticus (strain JCSC1435) protein is Mannonate dehydratase.